The sequence spans 280 residues: MLPRNATDKIQGNVSKPCFWKSLSPGQNWKSKSMRSFPEEFVKSTPGAFEHRVVFSVRWGNSWQLWLEREEKDLFMIEEDWDEFVDDNHLGPNDNVFFRHDDKMFLEVQIFKNDGNEIIDAPPEVEPETEPFHPTTPKNSHKETTTASASASASEFSDNWRETHGCADIKNPELYLLNPKNPYFVKTLTKGNDVLYVPKTVIKKYGLKFGPHLSPMHYLLPGDKINGSTKIYGGGSAPCFNGWVDLCRKYNLKTGDSMVCELERSGELVTAVRVHFINKT.

Residues 20–114 constitute a DNA-binding region (TF-B3 1); sequence WKSLSPGQNW…FLEVQIFKND (95 aa). The disordered stretch occupies residues 122–153; it reads PPEVEPETEPFHPTTPKNSHKETTTASASASA. The TF-B3 2 DNA-binding region spans 183–276; the sequence is YFVKTLTKGN…ELVTAVRVHF (94 aa).

It localises to the nucleus. This is B3 domain-containing protein At5g25470 from Arabidopsis thaliana (Mouse-ear cress).